We begin with the raw amino-acid sequence, 89 residues long: Small ribosomal subunit protein uS15 (89 aa).

The protein belongs to the universal ribosomal protein uS15 family. Part of the 30S ribosomal subunit. Forms a bridge to the 50S subunit in the 70S ribosome, contacting the 23S rRNA.

Its function is as follows. One of the primary rRNA binding proteins, it binds directly to 16S rRNA where it helps nucleate assembly of the platform of the 30S subunit by binding and bridging several RNA helices of the 16S rRNA. Forms an intersubunit bridge (bridge B4) with the 23S rRNA of the 50S subunit in the ribosome. This Desulforudis audaxviator (strain MP104C) protein is Small ribosomal subunit protein uS15.